The chain runs to 282 residues: Deoxyribonuclease-1 (282 aa).

An N-terminal signal peptide occupies residues 1–22; sequence MRGARLTGALLALAGLLQVALS. The N-linked (GlcNAc...) asparagine glycan is linked to N40. Residue E100 is part of the active site. Residues C123 and C126 are joined by a disulfide bond. Residue N128 is glycosylated (N-linked (GlcNAc...) asparagine). The active site involves H156. C195 and C231 are oxidised to a cystine.

The protein belongs to the DNase I family. Requires Ca(2+) as cofactor. Mg(2+) is required as a cofactor.

It is found in the secreted. The protein localises to the zymogen granule. Its subcellular location is the nucleus envelope. It catalyses the reaction Endonucleolytic cleavage to 5'-phosphodinucleotide and 5'-phosphooligonucleotide end-products.. In terms of biological role, serum endocuclease secreted into body fluids by a wide variety of exocrine and endocrine organs. Expressed by non-hematopoietic tissues and preferentially cleaves protein-free DNA. Among other functions, seems to be involved in cell death by apoptosis. Binds specifically to G-actin and blocks actin polymerization. Together with DNASE1L3, plays a key role in degrading neutrophil extracellular traps (NETs). NETs are mainly composed of DNA fibers and are released by neutrophils to bind pathogens during inflammation. Degradation of intravascular NETs by DNASE1 and DNASE1L3 is required to prevent formation of clots that obstruct blood vessels and cause organ damage following inflammation. The protein is Deoxyribonuclease-1 (DNASE1) of Equus caballus (Horse).